The following is a 258-amino-acid chain: Small ribosomal subunit protein mS23 (258 aa).

Residues Lys-230–Ala-239 are compositionally biased toward polar residues. Residues Lys-230–Leu-258 are disordered. The segment covering Ala-241–Leu-258 has biased composition (acidic residues).

The protein belongs to the mitochondrion-specific ribosomal protein mS23 family. As to quaternary structure, component of the mitochondrial small ribosomal subunit.

The protein resides in the mitochondrion. The chain is Small ribosomal subunit protein mS23 (RSM25) from Eremothecium gossypii (strain ATCC 10895 / CBS 109.51 / FGSC 9923 / NRRL Y-1056) (Yeast).